Here is a 116-residue protein sequence, read N- to C-terminus: Putative pterin-4-alpha-carbinolamine dehydratase 1 (116 aa).

This sequence belongs to the pterin-4-alpha-carbinolamine dehydratase family.

The catalysed reaction is (4aS,6R)-4a-hydroxy-L-erythro-5,6,7,8-tetrahydrobiopterin = (6R)-L-erythro-6,7-dihydrobiopterin + H2O. The protein is Putative pterin-4-alpha-carbinolamine dehydratase 1 of Cupriavidus pinatubonensis (strain JMP 134 / LMG 1197) (Cupriavidus necator (strain JMP 134)).